The sequence spans 1867 residues: TATA-binding protein-associated factor MOT1 (1867 aa).

Phosphoserine is present on Ser93. Residues 169-228 (KTDDIKQETSMLNASDKANENKSNANKKSARMLAMARRKKKMSAKNTPKHPVDITESSVS) are disordered. Positions 181 to 203 (NASDKANENKSNANKKSARMLAM) are enriched in low complexity. Positions 195–211 (KKSARMLAMARRKKKMS) match the Nuclear localization signal motif. HEAT repeat units lie at residues 289–326 (WQFQGIYELLLDNLMSENWEIRHGAALGLRELVKKHAY), 445–482 (GLLENVVRIVLYGLNQSDDDVQSVAASILTPITSEFVK), and 541–578 (WSFKSLVPKLYPFLRHSISSVRRAVLNLLIAFLSIKDD). Ser677 is subject to Phosphoserine. HEAT repeat units lie at residues 1108–1145 (SEVFTRFPVLLTFLRSNLSVFRYSAARTFADLAKISSV) and 1188–1225 (PYVIFLIVPLLGRMSDSNEDVRNLATTTFASIIKLVPL). The Helicase ATP-binding domain maps to 1284-1457 (AFLNKYHLHG…WSLFDFLMPG (174 aa)). An ATP-binding site is contributed by 1297-1304 (DDMGLGKT). The short motif at 1408–1411 (DEGH) is the DEGH box element. One copy of the HEAT 6 repeat lies at 1495 to 1537 (ALHKQVLPFMLRRLKEDVLSDLPPKIIQDYYCELGDLQKQLYM). Residues 1639–1787 (PIQNVISQHR…STVVNQQNSG (149 aa)) form the Helicase C-terminal domain. Positions 1802–1822 (PDNVTSQDNEEKNNGDSQAAK) are disordered.

Belongs to the SNF2/RAD54 helicase family. In terms of assembly, forms a complex with TBP which binds TATA DNA with high affinity but with altered specificity.

The protein resides in the mitochondrion. It is found in the nucleus. Functionally, regulates transcription in association with TATA binding protein (TBP). Removes TBP from the TATA box via its C-terminal ATPase activity. Both transcription activation and repression require its ATPase activity. The chain is TATA-binding protein-associated factor MOT1 (MOT1) from Saccharomyces cerevisiae (strain ATCC 204508 / S288c) (Baker's yeast).